Consider the following 394-residue polypeptide: Phosphoglycerate kinase (394 aa).

Residues 21-23 (DLN), arginine 36, 60-63 (HLGN), arginine 114, and arginine 147 contribute to the substrate site. Residues lysine 198, glutamate 315, and 341-344 (GGET) each bind ATP.

The protein belongs to the phosphoglycerate kinase family. As to quaternary structure, monomer.

Its subcellular location is the cytoplasm. It catalyses the reaction (2R)-3-phosphoglycerate + ATP = (2R)-3-phospho-glyceroyl phosphate + ADP. It functions in the pathway carbohydrate degradation; glycolysis; pyruvate from D-glyceraldehyde 3-phosphate: step 2/5. The chain is Phosphoglycerate kinase from Wigglesworthia glossinidia brevipalpis.